The sequence spans 832 residues: Beta-galactosidase (832 aa).

The signal sequence occupies residues 1 to 25; it reads MALKLVLMLMVALLAAVWSPPAVTA. Glutamate 183 acts as the Proton donor in catalysis. The active-site Nucleophile is the glutamate 252. One can recognise an SUEL-type lectin domain in the interval 741–832; the sequence is AYGRPKVHLS…KKLAVEAICE (92 aa).

Belongs to the glycosyl hydrolase 35 family.

It localises to the secreted. The protein localises to the extracellular space. It is found in the apoplast. It catalyses the reaction Hydrolysis of terminal non-reducing beta-D-galactose residues in beta-D-galactosides.. In Asparagus officinalis (Garden asparagus), this protein is Beta-galactosidase.